The sequence spans 264 residues: Apolipoprotein A-I (264 aa).

A signal peptide spans 1 to 18 (MKAVVLAVAVLFLTGSQA). Repeat copies occupy residues 67-88 (LNLLANWNTLTSTFNNLREQLG) and 89-110 (SVTKEFWDNLGEDTVWLRQQMN). The interval 67–264 (LNLLANWNTL…DQASKQLSAQ (198 aa)) is 10 X approximate tandem repeats. Met109 is modified (methionine sulfoxide). A 3; half-length repeat occupies 111–121 (KDLEEVKQKVQ). 5 consecutive repeat copies span residues 122 to 142 (SYLDNFQKKVNEEVERYRDKV), 144 to 165 (PLGKELHKDAQQKLKELQEKLA), 166 to 187 (PLGQDIRQRAREYVDALRTHLG), 188 to 208 (SYTQGMRQGLAKRLEALKESA), and 209 to 229 (PVSEYQVKASKHLKTFSEKAK). Met193 carries the post-translational modification Methionine sulfoxide. A 9; half-length repeat occupies 230-240 (PALEDLRQGLM). At Met240 the chain carries Methionine sulfoxide. Copy 10 of the repeat occupies 241–264 (PVMESLKASFLSSIDQASKQLSAQ).

This sequence belongs to the apolipoprotein A1/A4/E family. Homodimer. Interacts with APOA1BP and CLU. Component of a sperm activating protein complex (SPAP), consisting of APOA1, an immunoglobulin heavy chain, an immunoglobulin light chain and albumin. Interacts with NDRG1. Interacts with SCGB3A2. Interacts with NAXE and YJEFN3. Glycosylated. Post-translationally, palmitoylated. In terms of processing, phosphorylation sites are present in the extracellular medium. Major protein of plasma HDL, also found in chylomicrons.

The protein resides in the secreted. Its function is as follows. Participates in the reverse transport of cholesterol from tissues to the liver for excretion by promoting cholesterol efflux from tissues and by acting as a cofactor for the lecithin cholesterol acyltransferase (LCAT). As part of the SPAP complex, activates spermatozoa motility. This chain is Apolipoprotein A-I (Apoa1), found in Heterocephalus glaber (Naked mole rat).